A 547-amino-acid polypeptide reads, in one-letter code: MATKLIKHGSEAREEMLKGVDILANAVKVTLGPKGRNVLIEQSFGAPKITKDGVTVAKSIELKEKIRNAGAQLLKSAATKAAEVAGDGTTTATVLARALAREGNKLVAAGYNPMDLKRGMDLAVNTVVEEIKKSSKKINSQEEIAQVGTISSNGDKEIGEKIAKAMEEVGKEGVITVEEAKNFSFDVEVVKGMMFDRGYLSPYFVTNSEKMVAELENPFILLFEKKLSNLQPMLPILEAVVQSQRPLLIIAEDVEGEALATLVVNRLRGGLKVAAVKAPGFGDRRKAMMEDIAILTKGELITEDLGMKLENVSIKSLGTAKRVTISKENTVIVDGSGDKKSIEDRVLQIKSQIAETTSDYDKEKLQERLAKLSGGVAVLKVGGATEVEVKERKDRVEDALAATRAAVEEGVVAGGGVTLLHTSQILTKLKVENKDQQAGIEIVIEALKDPLKQIVENAGENGGVVVGKLLEHKDKNFGFNAQDMQYVDMIQAGIIDPAKVVRTALQDAASVASLIITTETLIVDEPSKEEPMPMRGSGMGGMGGMDF.

Residues threonine 30–proline 33, lysine 51, aspartate 87–threonine 91, glycine 415, and aspartate 496 contribute to the ATP site. Residues lysine 528–phenylalanine 547 form a disordered region. Over residues serine 537 to phenylalanine 547 the composition is skewed to gly residues.

This sequence belongs to the chaperonin (HSP60) family. As to quaternary structure, forms a cylinder of 14 subunits composed of two heptameric rings stacked back-to-back. Interacts with the co-chaperonin GroES.

The protein resides in the cytoplasm. The enzyme catalyses ATP + H2O + a folded polypeptide = ADP + phosphate + an unfolded polypeptide.. Functionally, together with its co-chaperonin GroES, plays an essential role in assisting protein folding. The GroEL-GroES system forms a nano-cage that allows encapsulation of the non-native substrate proteins and provides a physical environment optimized to promote and accelerate protein folding. This Rickettsia canadensis (strain McKiel) protein is Chaperonin GroEL.